Here is a 350-residue protein sequence, read N- to C-terminus: Outer membrane protein A (350 aa).

Residues 1–21 (MKKTAIAIAVALAGFATVAQA) form the signal peptide. 8 beta stranded membrane-spanning segments follow: residues 27 to 37 (TWYAGGKLGWS), 59 to 70 (QLGAGAFGGYQV), 74 to 82 (LGFEMGYDW), 100 to 111 (QAVQLTAKLGYP), 116 to 124 (LDIYTRLGG), 146 to 155 (PVFAGGVEWA), 160 to 167 (IATRLEYQ), and 186 to 194 (MLSVGVSYR). 4 consecutive repeat copies span residues 205-206 (AP), 207-208 (AP), 209-210 (AP), and 211-212 (AP). The segment at 205 to 212 (APAPAPAP) is 4 X 2 AA tandem repeats of A-P. Positions 214–342 (VTTKTFTLKS…RVAIEVKGYK (129 aa)) constitute an OmpA-like domain. Cysteines 315 and 327 form a disulfide.

This sequence belongs to the outer membrane OOP (TC 1.B.6) superfamily. OmpA family. In terms of assembly, monomer and homodimer.

The protein localises to the cell outer membrane. Its function is as follows. With TolR probably plays a role in maintaining the position of the peptidoglycan cell wall in the periplasm. Acts as a porin with low permeability that allows slow penetration of small solutes; an internal gate slows down solute passage. Functionally, required for conjugation with F-type plasmids; probably serves as the mating receptor on recipient cells. This Klebsiella aerogenes (Enterobacter aerogenes) protein is Outer membrane protein A.